Consider the following 138-residue polypeptide: Small ribosomal subunit protein bS16 (138 aa).

The interval 92–138 (QAAKREADAKQAAKEAAEAKAAAEAEAKAAAEAESADAGAEEAPAEA) is disordered. Over residues 94-122 (AKREADAKQAAKEAAEAKAAAEAEAKAAA) the composition is skewed to basic and acidic residues.

The protein belongs to the bacterial ribosomal protein bS16 family.

In Synechococcus sp. (strain WH7803), this protein is Small ribosomal subunit protein bS16.